A 474-amino-acid chain; its full sequence is Probable periplasmic serine endoprotease DegP-like (474 aa).

The signal sequence occupies residues 1–25; it reads MRNLKSVTPLLMAALLWGQSLLAQA. Active-site charge relay system residues include histidine 113, aspartate 143, and serine 216. Substrate contacts are provided by residues 214-216 and 271-275; these read GNS and LGVVI. 2 consecutive PDZ domains span residues 260–351 and 357–463; these read LKAD…VRDG and KVTI…LRQG.

The protein belongs to the peptidase S1C family.

It localises to the periplasm. It carries out the reaction Acts on substrates that are at least partially unfolded. The cleavage site P1 residue is normally between a pair of hydrophobic residues, such as Val-|-Val.. Its function is as follows. Might be efficient in the degradation of transiently denatured and unfolded proteins which accumulate in the periplasm following stress conditions. In Ectopseudomonas mendocina (strain ymp) (Pseudomonas mendocina), this protein is Probable periplasmic serine endoprotease DegP-like.